A 21-amino-acid chain; its full sequence is thr operon leader peptide (21 aa).

Belongs to the thr operon leader peptide family.

In terms of biological role, this protein is involved in control of the biosynthesis of threonine. The protein is thr operon leader peptide of Salmonella choleraesuis (strain SC-B67).